The primary structure comprises 107 residues: ESAT-6-like protein EsxD (107 aa).

This sequence belongs to the WXG100 family. CFP-10 subfamily.

The protein resides in the secreted. The protein is ESAT-6-like protein EsxD of Mycobacterium tuberculosis (strain ATCC 25618 / H37Rv).